A 296-amino-acid chain; its full sequence is ATP synthase peripheral stalk subunit OSCP, mitochondrial (296 aa).

Belongs to the ATPase delta chain family. In terms of assembly, component of the ATP synthase complex composed at least of ATP5F1A/subunit alpha, ATP5F1B/subunit beta, ATP5MC1/subunit c (homooctomer), MT-ATP6/subunit a, MT-ATP8/subunit 8, ATP5ME/subunit e, ATP5MF/subunit f, ATP5MG/subunit g, ATP5MK/subunit k, ATP5MJ/subunit j, ATP5F1C/subunit gamma, ATP5F1D/subunit delta, ATP5F1E/subunit epsilon, ATP5PF/subunit F6, ATP5PB/subunit b, ATP5PD/subunit d, ATP5PO/subunit OSCP. ATP synthase complex consists of a soluble F(1) head domain (subunits alpha(3) and beta(3)) - the catalytic core - and a membrane F(0) domain - the membrane proton channel (subunits c, a, 8, e, f, g, k and j). These two domains are linked by a central stalk (subunits gamma, delta, and epsilon) rotating inside the F1 region and a stationary peripheral stalk (subunits F6, b, d, and OSCP).

It localises to the mitochondrion. The protein localises to the mitochondrion inner membrane. Subunit OSCP, of the mitochondrial membrane ATP synthase complex (F(1)F(0) ATP synthase or Complex V) that produces ATP from ADP in the presence of a proton gradient across the membrane which is generated by electron transport complexes of the respiratory chain. ATP synthase complex consist of a soluble F(1) head domain - the catalytic core - and a membrane F(1) domain - the membrane proton channel. These two domains are linked by a central stalk rotating inside the F(1) region and a stationary peripheral stalk. During catalysis, ATP synthesis in the catalytic domain of F(1) is coupled via a rotary mechanism of the central stalk subunits to proton translocation. In vivo, can only synthesize ATP although its ATP hydrolase activity can be activated artificially in vitro. Part of the complex F(0) domain. Part of the complex F(0) domain and the peripheric stalk, which acts as a stator to hold the catalytic alpha(3)beta(3) subcomplex and subunit a/ATP6 static relative to the rotary elements. The sequence is that of ATP synthase peripheral stalk subunit OSCP, mitochondrial from Dictyostelium discoideum (Social amoeba).